The following is a 132-amino-acid chain: Small ribosomal subunit protein uS8 (132 aa).

The protein belongs to the universal ribosomal protein uS8 family. As to quaternary structure, part of the 30S ribosomal subunit. Contacts proteins S5 and S12.

Its function is as follows. One of the primary rRNA binding proteins, it binds directly to 16S rRNA central domain where it helps coordinate assembly of the platform of the 30S subunit. The protein is Small ribosomal subunit protein uS8 of Geobacter sp. (strain M21).